A 394-amino-acid chain; its full sequence is Ribulose bisphosphate carboxylase large chain (394 aa).

K5 is subject to N6,N6,N6-trimethyllysine. 2 residues coordinate substrate: N114 and T164. K166 serves as the catalytic Proton acceptor. K168 contributes to the substrate binding site. Mg(2+)-binding residues include K192, D194, and E195. K192 is modified (N6-carboxylysine). H285 acts as the Proton acceptor in catalysis. Substrate is bound by residues R286, H318, and S370.

This sequence belongs to the RuBisCO large chain family. Type I subfamily. In terms of assembly, heterohexadecamer of 8 large chains and 8 small chains; disulfide-linked. The disulfide link is formed within the large subunit homodimers. The cofactor is Mg(2+). The disulfide bond which can form in the large chain dimeric partners within the hexadecamer appears to be associated with oxidative stress and protein turnover.

It is found in the plastid. Its subcellular location is the chloroplast. It carries out the reaction 2 (2R)-3-phosphoglycerate + 2 H(+) = D-ribulose 1,5-bisphosphate + CO2 + H2O. The catalysed reaction is D-ribulose 1,5-bisphosphate + O2 = 2-phosphoglycolate + (2R)-3-phosphoglycerate + 2 H(+). Its function is as follows. RuBisCO catalyzes two reactions: the carboxylation of D-ribulose 1,5-bisphosphate, the primary event in carbon dioxide fixation, as well as the oxidative fragmentation of the pentose substrate in the photorespiration process. Both reactions occur simultaneously and in competition at the same active site. This chain is Ribulose bisphosphate carboxylase large chain (rbcL), found in Alisma plantago-aquatica (Common water-plantain).